We begin with the raw amino-acid sequence, 203 residues long: 3-isopropylmalate dehydratase small subunit (203 aa).

It belongs to the LeuD family. LeuD type 1 subfamily. As to quaternary structure, heterodimer of LeuC and LeuD.

The catalysed reaction is (2R,3S)-3-isopropylmalate = (2S)-2-isopropylmalate. It functions in the pathway amino-acid biosynthesis; L-leucine biosynthesis; L-leucine from 3-methyl-2-oxobutanoate: step 2/4. Its function is as follows. Catalyzes the isomerization between 2-isopropylmalate and 3-isopropylmalate, via the formation of 2-isopropylmaleate. The chain is 3-isopropylmalate dehydratase small subunit from Symbiobacterium thermophilum (strain DSM 24528 / JCM 14929 / IAM 14863 / T).